The following is a 595-amino-acid chain: Coagulation factor XII (595 aa).

Residues 1–19 form the signal peptide; the sequence is MTALLFLGSLLMSLDLTLS. Residues 41–89 form the Fibronectin type-II domain; sequence VDGKLCHFPFQYHRRLYHKCIHKGQPGSRPWCATTPNFDEDQQWGYCLE. Disulfide bonds link C46-C72, C60-C87, C97-C109, C103-C118, C120-C129, C134-C162, C160-C169, C177-C188, C182-C197, C199-C208, C216-C294, C237-C276, and C265-C289. Positions 93-130 constitute an EGF-like 1 domain; sequence VKDHCSKHSPCHKGGTCVNTPNGPHCLCPEHLTGKHCQ. An O-linked (Fuc) threonine glycan is attached at T108. Residues 132-172 form the Fibronectin type-I domain; that stretch reads EKCFESQLLKFFHENEIWFRTGPGGVARCQCKGPQAVCKLL. The EGF-like 2 domain occupies 173–209; the sequence is TSQVCRVNPCLNGGTCLLVEDHRLCHCPAGYAGPFCD. Residues 215 to 294 enclose the Kringle domain; that stretch reads TCYEDRGLSY…SWDYCDLEQC (80 aa). A glycan (N-linked (GlcNAc...) asparagine) is linked at N248. Residue T298 is glycosylated (O-linked (GalNAc...) threonine). Positions 302 to 332 are disordered; the sequence is PVSPESHDMLKPRPPILQSSPRDSTRNQNVV. A glycan (O-linked (GalNAc...) serine) is linked at S307. Polar residues predominate over residues 318 to 332; sequence LQSSPRDSTRNQNVV. T326 carries an O-linked (GalNAc...) threonine glycan. Cystine bridges form between C340-C466, C378-C394, C386-C455, C417-C420, C480-C549, C512-C528, and C539-C570. One can recognise a Peptidase S1 domain in the interval 354–594; sequence VVGGLVALPG…YLDWIQEHTA (241 aa). H393 (charge relay system) is an active-site residue. N414 carries an N-linked (GlcNAc...) asparagine glycan. D442 serves as the catalytic Charge relay system. S543 acts as the Charge relay system in catalysis.

It belongs to the peptidase S1 family. In terms of assembly, interacts with HRG; the interaction, which is enhanced in the presence of zinc ions and inhibited by heparin-binding, inhibits factor XII autoactivation and contact-initiated coagulation. O- and N-glycosylated.

Its subcellular location is the secreted. The catalysed reaction is Selective cleavage of Arg-|-Ile bonds in factor VII to form factor VIIa and factor XI to form factor XIa.. With respect to regulation, activity is promoted in the presence of negatively charged surfaces. Its function is as follows. Factor XII is a serum glycoprotein that participates in the initiation of blood coagulation, fibrinolysis, and the generation of bradykinin and angiotensin. Prekallikrein is cleaved by factor XII to form kallikrein, which then cleaves factor XII first to alpha-factor XIIa and then trypsin cleaves it to beta-factor XIIa. Alpha-factor XIIa activates factor XI to factor XIa. This Rattus norvegicus (Rat) protein is Coagulation factor XII (F12).